The chain runs to 679 residues: Pescadillo homolog (679 aa).

A BRCT domain is found at 351–471; that stretch reads EVASLFAPFT…KLLRADHYSP (121 aa). Disordered stretches follow at residues 413–437 and 480–679; these read ALSN…PKAQ and SPWV…AEAV. The segment covering 418–427 has biased composition (polar residues); it reads APASNVQETE. Acidic residues-rich tracts occupy residues 503 to 528 and 543 to 580; these read GEAE…DMEA and DVAD…DISE. The stretch at 573-679 forms a coiled coil; sequence DAESDISEGE…EKAKAAAEAV (107 aa). 4 stretches are compositionally biased toward basic and acidic residues: residues 582-614, 623-634, 646-662, and 669-679; these read EAAR…ENAT, KRAEEEERERQK, KRIE…SENL, and VEKAKAAAEAV.

Belongs to the pescadillo family. As to quaternary structure, component of the NOP7 complex, composed of erb1, nop7 and ytm1. The complex is held together by erb1, which interacts with nop7 via its N-terminal domain and with ytm1 via a high-affinity interaction between the seven-bladed beta-propeller domains of the 2 proteins. The NOP7 complex associates with the 66S pre-ribosome.

Its subcellular location is the nucleus. The protein resides in the nucleolus. It localises to the nucleoplasm. Functionally, component of the NOP7 complex, which is required for maturation of the 25S and 5.8S ribosomal RNAs and formation of the 60S ribosome. The protein is Pescadillo homolog (nop7) of Pyrenophora tritici-repentis (strain Pt-1C-BFP) (Wheat tan spot fungus).